We begin with the raw amino-acid sequence, 591 residues long: Probable translation initiation factor IF-2 (591 aa).

One can recognise a tr-type G domain in the interval 7–223; it reads LRTPIVCVMG…LLGLAQRFLE (217 aa). The interval 16–23 is G1; the sequence is GHVDHGKT. 16 to 23 is a GTP binding site; it reads GHVDHGKT. A G2 region spans residues 41-45; that stretch reads AITQH. The G3 stretch occupies residues 78–81; sequence DTPG. Residues 78–82 and 132–135 contribute to the GTP site; these read DTPGH and NKID. The tract at residues 132 to 135 is G4; it reads NKID. The interval 200 to 202 is G5; the sequence is SAI.

The protein belongs to the TRAFAC class translation factor GTPase superfamily. Classic translation factor GTPase family. IF-2 subfamily.

Function in general translation initiation by promoting the binding of the formylmethionine-tRNA to ribosomes. Seems to function along with eIF-2. This is Probable translation initiation factor IF-2 from Methanococcoides burtonii (strain DSM 6242 / NBRC 107633 / OCM 468 / ACE-M).